The following is a 99-amino-acid chain: Signal recognition particle 19 kDa protein (99 aa).

It belongs to the SRP19 family. In terms of assembly, part of the signal recognition particle protein translocation system, which is composed of SRP and FtsY. Archaeal SRP consists of a 7S RNA molecule of 300 nucleotides and two protein subunits: SRP54 and SRP19.

The protein resides in the cytoplasm. Involved in targeting and insertion of nascent membrane proteins into the cytoplasmic membrane. Binds directly to 7S RNA and mediates binding of the 54 kDa subunit of the SRP. In Ignicoccus hospitalis (strain KIN4/I / DSM 18386 / JCM 14125), this protein is Signal recognition particle 19 kDa protein.